A 512-amino-acid polypeptide reads, in one-letter code: Na(+)/H(+) antiporter NhaB (512 aa).

11 consecutive transmembrane segments (helical) span residues 28-48 (FLIINPLVFIFQPFMAGWLLV), 52-72 (IFTLAMALKCYPLLPGGLLAI), 97-117 (LLLMFMVAGIYFMKQLLLFIF), 144-164 (FLDALTVVAVVISVAIGFYGI), 201-221 (LMMHAGVGTALGGVMTMVGEP), 237-257 (FFLRVAPVSVPVFICGMLTCF), 296-330 (LALIAQGIIGAWLIFALAFHLAEVGLIGLSVIILA), 347-367 (TEALPFTALLAVFFAIVAVII), 390-410 (LFYLFNGLLSSISDNVFVGSV), 446-466 (ATPNGQAAFLFLLTSALAPLI), and 474-494 (VWMALPYTVVLTLVGLLCVKF).

It belongs to the NhaB Na(+)/H(+) (TC 2.A.34) antiporter family.

It is found in the cell inner membrane. The catalysed reaction is 2 Na(+)(in) + 3 H(+)(out) = 2 Na(+)(out) + 3 H(+)(in). In terms of biological role, na(+)/H(+) antiporter that extrudes sodium in exchange for external protons. The sequence is that of Na(+)/H(+) antiporter NhaB from Enterobacter sp. (strain 638).